A 777-amino-acid chain; its full sequence is 1,4-alpha-glucan branching enzyme GlgB (777 aa).

Residue aspartate 408 is the Nucleophile of the active site. The Proton donor role is filled by glutamate 461.

Belongs to the glycosyl hydrolase 13 family. GlgB subfamily. As to quaternary structure, monomer.

The catalysed reaction is Transfers a segment of a (1-&gt;4)-alpha-D-glucan chain to a primary hydroxy group in a similar glucan chain.. It participates in glycan biosynthesis; glycogen biosynthesis. In terms of biological role, catalyzes the formation of the alpha-1,6-glucosidic linkages in glycogen by scission of a 1,4-alpha-linked oligosaccharide from growing alpha-1,4-glucan chains and the subsequent attachment of the oligosaccharide to the alpha-1,6 position. In Actinobacillus pleuropneumoniae serotype 5b (strain L20), this protein is 1,4-alpha-glucan branching enzyme GlgB.